A 340-amino-acid chain; its full sequence is Uroporphyrinogen decarboxylase (340 aa).

Substrate contacts are provided by residues 23–27 (RQAGR), D72, Y147, T202, and H316.

Belongs to the uroporphyrinogen decarboxylase family. As to quaternary structure, homodimer.

It is found in the cytoplasm. It catalyses the reaction uroporphyrinogen III + 4 H(+) = coproporphyrinogen III + 4 CO2. It participates in porphyrin-containing compound metabolism; protoporphyrin-IX biosynthesis; coproporphyrinogen-III from 5-aminolevulinate: step 4/4. Catalyzes the decarboxylation of four acetate groups of uroporphyrinogen-III to yield coproporphyrinogen-III. The polypeptide is Uroporphyrinogen decarboxylase (Trichlorobacter lovleyi (strain ATCC BAA-1151 / DSM 17278 / SZ) (Geobacter lovleyi)).